The primary structure comprises 904 residues: E3 ubiquitin-protein ligase HACE1 (904 aa).

ANK repeat units lie at residues 34–63 (AVYT…DVNY), 68–97 (VKRS…NPNY), 101–130 (SGCT…DVNI), 134–163 (EGLT…NVDV), 167–196 (MGQT…DINR), 200–230 (SGAT…YLPD), and 232–261 (NGVT…RLFQ). In terms of domain architecture, HECT spans 569–904 (SNEKLKQGIA…HCGSYGYTMA (336 aa)). The Glycyl thioester intermediate role is filled by Cys871.

It is found in the golgi apparatus. It localises to the golgi stack membrane. The protein localises to the cytoplasm. The protein resides in the endoplasmic reticulum. The enzyme catalyses S-ubiquitinyl-[E2 ubiquitin-conjugating enzyme]-L-cysteine + [acceptor protein]-L-lysine = [E2 ubiquitin-conjugating enzyme]-L-cysteine + N(6)-ubiquitinyl-[acceptor protein]-L-lysine.. It participates in protein modification; protein ubiquitination. In terms of biological role, E3 ubiquitin-protein ligase involved in Golgi membrane fusion and regulation of small GTPases. Acts as a regulator of Golgi membrane dynamics during the cell cycle: recruited to Golgi membrane by Rab proteins and regulates postmitotic Golgi membrane fusion. Acts by mediating ubiquitination during mitotic Golgi disassembly, ubiquitination serving as a signal for Golgi reassembly later, after cell division. The polypeptide is E3 ubiquitin-protein ligase HACE1 (hace1) (Danio rerio (Zebrafish)).